Reading from the N-terminus, the 144-residue chain is Aspartate carbamoyltransferase regulatory chain (144 aa).

Positions 103, 108, 132, and 135 each coordinate Zn(2+).

This sequence belongs to the PyrI family. In terms of assembly, contains catalytic and regulatory chains. It depends on Zn(2+) as a cofactor.

Its function is as follows. Involved in allosteric regulation of aspartate carbamoyltransferase. This is Aspartate carbamoyltransferase regulatory chain from Clostridium tetani (strain Massachusetts / E88).